A 482-amino-acid chain; its full sequence is MKFIVKPHPEIFVKSESVRKRFTKILESNIRIIIQNRTESVAVFNRRDHIEVSANSHQYYQQVLEILTTTPGIQQVLEVKQSDFKDLHDIYEQVLELSRERIENKTFVVRAKRRGKHDFTSIELERYVGGGLNQSVESASVKLHNPDITIKIEVVDDKLNQILAHHKGLGGFPLGTQEDLLSLISGGFDSGVSSYLHIKRGSKVHYCFFNLGGPAHEIGVKQVAHFLWNKYGSSAKVRFISVDFEPVVAEILEKVEDGQMGVVLKRMFMRAAGMVAEKFDIQALVTGEALGQVSSQTLTNLRHIDVVTDRLILRPLINWDKDEIIKVARDIGTEDFAKTMPEYCGVISKKPTVKAVKEKLEAEEANFNFDILEQVVRNARQMDIRDIAKESAQAAPEVEQVQAIEEHAVVLDIRSPDEEDDSPLEIDGVEVKHIPFYKLSTQFGDLDQSKTYLLYCARGVMSRLQALYLQEQGFNNVKVYRP.

Residues 61–165 (QQVLEILTTT…DDKLNQILAH (105 aa)) form the THUMP domain. ATP is bound by residues 183–184 (LI), Lys265, Gly287, and Gln296. The cysteines at positions 344 and 456 are disulfide-linked. Residues 404-482 (IEEHAVVLDI…GFNNVKVYRP (79 aa)) form the Rhodanese domain. Cys456 functions as the Cysteine persulfide intermediate in the catalytic mechanism.

It belongs to the ThiI family.

The protein localises to the cytoplasm. It carries out the reaction [ThiI sulfur-carrier protein]-S-sulfanyl-L-cysteine + a uridine in tRNA + 2 reduced [2Fe-2S]-[ferredoxin] + ATP + H(+) = [ThiI sulfur-carrier protein]-L-cysteine + a 4-thiouridine in tRNA + 2 oxidized [2Fe-2S]-[ferredoxin] + AMP + diphosphate. The enzyme catalyses [ThiS sulfur-carrier protein]-C-terminal Gly-Gly-AMP + S-sulfanyl-L-cysteinyl-[cysteine desulfurase] + AH2 = [ThiS sulfur-carrier protein]-C-terminal-Gly-aminoethanethioate + L-cysteinyl-[cysteine desulfurase] + A + AMP + 2 H(+). Its pathway is cofactor biosynthesis; thiamine diphosphate biosynthesis. Its function is as follows. Catalyzes the ATP-dependent transfer of a sulfur to tRNA to produce 4-thiouridine in position 8 of tRNAs, which functions as a near-UV photosensor. Also catalyzes the transfer of sulfur to the sulfur carrier protein ThiS, forming ThiS-thiocarboxylate. This is a step in the synthesis of thiazole, in the thiamine biosynthesis pathway. The sulfur is donated as persulfide by IscS. The polypeptide is tRNA sulfurtransferase (Vibrio vulnificus (strain YJ016)).